Here is a 270-residue protein sequence, read N- to C-terminus: Thymidylate synthase (270 aa).

Residues Arg-28 and 133–134 (RR) each bind dUMP. The active-site Nucleophile is Cys-153. DUMP-binding positions include 173 to 176 (RSAD), Asn-184, and 214 to 216 (HIY). Asp-176 lines the (6R)-5,10-methylene-5,6,7,8-tetrahydrofolate pocket. Ala-269 provides a ligand contact to (6R)-5,10-methylene-5,6,7,8-tetrahydrofolate.

Belongs to the thymidylate synthase family. Bacterial-type ThyA subfamily. Homodimer.

It localises to the cytoplasm. It carries out the reaction dUMP + (6R)-5,10-methylene-5,6,7,8-tetrahydrofolate = 7,8-dihydrofolate + dTMP. The protein operates within pyrimidine metabolism; dTTP biosynthesis. Catalyzes the reductive methylation of 2'-deoxyuridine-5'-monophosphate (dUMP) to 2'-deoxythymidine-5'-monophosphate (dTMP) while utilizing 5,10-methylenetetrahydrofolate (mTHF) as the methyl donor and reductant in the reaction, yielding dihydrofolate (DHF) as a by-product. This enzymatic reaction provides an intracellular de novo source of dTMP, an essential precursor for DNA biosynthesis. The polypeptide is Thymidylate synthase (Corynebacterium diphtheriae (strain ATCC 700971 / NCTC 13129 / Biotype gravis)).